The chain runs to 537 residues: [Pyruvate dehydrogenase [acetyl-transferring]]-phosphatase 1, mitochondrial (537 aa).

The transit peptide at 1-71 directs the protein to the mitochondrion; it reads MPAPTQLFFP…WWHYTQGRRY (71 aa). The 417-residue stretch at 109–525 folds into the PPM-type phosphatase domain; the sequence is ILGFDSNQLP…DDITIIVVQF (417 aa). Mn(2+)-binding residues include Asp144 and Gly145. Lys202 is subject to N6-acetyllysine. Residues Asp418 and Asp516 each coordinate Mn(2+).

It belongs to the PP2C family. As to quaternary structure, heterodimer of a catalytic (PDP1) and a regulatory (PDPR) subunit. Mn(2+) serves as cofactor. The cofactor is Mg(2+).

It localises to the mitochondrion. It carries out the reaction O-phospho-L-seryl-[pyruvate dehydrogenase E1 alpha subunit] + H2O = L-seryl-[pyruvate dehydrogenase E1 alpha subunit] + phosphate. Its activity is regulated as follows. Magnesium-dependent and calcium-stimulated. PDP1 activity strongly depends on its Ca(2+)-dependent binding to the lipoyl domain of E2 subunit of component of the pyruvate dehydrogenase complex. Its function is as follows. Mitochondrial enzyme that catalyzes the dephosphorylation and concomitant reactivation of the alpha subunit of the E1 component of the pyruvate dehydrogenase complex (PDC), thereby stimulating the conversion of pyruvate into acetyl-CoA. In Pongo abelii (Sumatran orangutan), this protein is [Pyruvate dehydrogenase [acetyl-transferring]]-phosphatase 1, mitochondrial (PDP1).